Reading from the N-terminus, the 197-residue chain is MYEYIKGKYIDMYKDYIVIENNNIGYKIYTSGSTMAKLPSIGENIMLYTEQIVREDFIGVYGFLTKDELSMFKLLLTINGVGAKASLSLLSISNVSTLKYAIKMGDEKTITRAPGIGKKTAQRIILELKDKIEIDILEEDDEQIINKVTDDKKVLEAVAALVTLGYSEKEANKVINSCDKNNSLEQIIKEALKYLMK.

Residues 1 to 64 form a domain I region; that stretch reads MYEYIKGKYI…EDFIGVYGFL (64 aa). The tract at residues 65 to 144 is domain II; the sequence is TKDELSMFKL…DILEEDDEQI (80 aa). A flexible linker region spans residues 145–149; that stretch reads INKVT. Residues 149-197 form a domain III region; it reads TDDKKVLEAVAALVTLGYSEKEANKVINSCDKNNSLEQIIKEALKYLMK.

It belongs to the RuvA family. Homotetramer. Forms an RuvA(8)-RuvB(12)-Holliday junction (HJ) complex. HJ DNA is sandwiched between 2 RuvA tetramers; dsDNA enters through RuvA and exits via RuvB. An RuvB hexamer assembles on each DNA strand where it exits the tetramer. Each RuvB hexamer is contacted by two RuvA subunits (via domain III) on 2 adjacent RuvB subunits; this complex drives branch migration. In the full resolvosome a probable DNA-RuvA(4)-RuvB(12)-RuvC(2) complex forms which resolves the HJ.

The protein localises to the cytoplasm. The RuvA-RuvB-RuvC complex processes Holliday junction (HJ) DNA during genetic recombination and DNA repair, while the RuvA-RuvB complex plays an important role in the rescue of blocked DNA replication forks via replication fork reversal (RFR). RuvA specifically binds to HJ cruciform DNA, conferring on it an open structure. The RuvB hexamer acts as an ATP-dependent pump, pulling dsDNA into and through the RuvAB complex. HJ branch migration allows RuvC to scan DNA until it finds its consensus sequence, where it cleaves and resolves the cruciform DNA. In Clostridium botulinum (strain Kyoto / Type A2), this protein is Holliday junction branch migration complex subunit RuvA.